Reading from the N-terminus, the 168-residue chain is Small ribosomal subunit protein uS5 (168 aa).

Positions 17–80 (IEDQLVAVNR…EDGKKKMINV (64 aa)) constitute an S5 DRBM domain.

Belongs to the universal ribosomal protein uS5 family. Part of the 30S ribosomal subunit. Contacts proteins S4 and S8.

Its function is as follows. With S4 and S12 plays an important role in translational accuracy. Functionally, located at the back of the 30S subunit body where it stabilizes the conformation of the head with respect to the body. This is Small ribosomal subunit protein uS5 from Lactobacillus helveticus (strain DPC 4571).